A 779-amino-acid chain; its full sequence is Ribonucleoside-diphosphate reductase large subunit (779 aa).

Substrate-binding positions include Ser-178, 193 to 194, Gly-222, 420 to 424, and 614 to 618; these read SC, NLCIE, and PTATS. Cys-194 and Cys-440 are disulfide-bonded. Asn-420 serves as the catalytic Proton acceptor. The Cysteine radical intermediate role is filled by Cys-422. The active-site Proton acceptor is Glu-424.

It belongs to the ribonucleoside diphosphate reductase large chain family. As to quaternary structure, heterotetramer composed of a homodimer of the large subunit (R1) and a homodimer of the small subunit (R2). Larger multisubunit protein complex are also active, composed of (R1)n(R2)n.

It catalyses the reaction a 2'-deoxyribonucleoside 5'-diphosphate + [thioredoxin]-disulfide + H2O = a ribonucleoside 5'-diphosphate + [thioredoxin]-dithiol. Its activity is regulated as follows. Under complex allosteric control mediated by deoxynucleoside triphosphates and ATP binding. The type of nucleotide bound at the specificity site determines substrate preference. It seems probable that ATP makes the enzyme reduce CDP and UDP, dGTP favors ADP reduction and dTTP favors GDP reduction. Ribonucleoside-diphosphate reductase holoenzyme provides the precursors necessary for viral DNA synthesis. Allows virus growth in non-dividing cells. Catalyzes the biosynthesis of deoxyribonucleotides from the corresponding ribonucleotides. The protein is Ribonucleoside-diphosphate reductase large subunit of African swine fever virus (isolate Tick/Malawi/Lil 20-1/1983) (ASFV).